A 357-amino-acid polypeptide reads, in one-letter code: 3-isopropylmalate dehydrogenase (357 aa).

75–88 (GPKWDTLPPAERPE) provides a ligand contact to NAD(+). Positions 96, 106, 134, and 222 each coordinate substrate. 3 residues coordinate Mg(2+): aspartate 222, aspartate 246, and aspartate 250. 279–291 (GSAPDIAGQQKAN) contacts NAD(+).

Belongs to the isocitrate and isopropylmalate dehydrogenases family. LeuB type 1 subfamily. As to quaternary structure, homodimer. Requires Mg(2+) as cofactor. It depends on Mn(2+) as a cofactor.

It localises to the cytoplasm. It carries out the reaction (2R,3S)-3-isopropylmalate + NAD(+) = 4-methyl-2-oxopentanoate + CO2 + NADH. Its pathway is amino-acid biosynthesis; L-leucine biosynthesis; L-leucine from 3-methyl-2-oxobutanoate: step 3/4. Functionally, catalyzes the oxidation of 3-carboxy-2-hydroxy-4-methylpentanoate (3-isopropylmalate) to 3-carboxy-4-methyl-2-oxopentanoate. The product decarboxylates to 4-methyl-2 oxopentanoate. This Moorella thermoacetica (strain ATCC 39073 / JCM 9320) protein is 3-isopropylmalate dehydrogenase.